The sequence spans 253 residues: Glucosamine-6-phosphate deaminase (253 aa).

The active-site Proton acceptor; for enolization step is the Asp-67. Asn-136 (for ring-opening step) is an active-site residue. His-138 functions as the Proton acceptor; for ring-opening step in the catalytic mechanism. Glu-143 acts as the For ring-opening step in catalysis.

The protein belongs to the glucosamine/galactosamine-6-phosphate isomerase family. NagB subfamily.

It carries out the reaction alpha-D-glucosamine 6-phosphate + H2O = beta-D-fructose 6-phosphate + NH4(+). The protein operates within amino-sugar metabolism; N-acetylneuraminate degradation; D-fructose 6-phosphate from N-acetylneuraminate: step 5/5. Functionally, catalyzes the reversible isomerization-deamination of glucosamine 6-phosphate (GlcN6P) to form fructose 6-phosphate (Fru6P) and ammonium ion. The protein is Glucosamine-6-phosphate deaminase of Thermoanaerobacter sp. (strain X514).